A 467-amino-acid polypeptide reads, in one-letter code: 3-isopropylmalate dehydratase large subunit (467 aa).

[4Fe-4S] cluster is bound by residues C348, C408, and C411. The interval 417–445 (DQLTPGERSASTSNRNFEGRQGKGGRTHL) is disordered.

This sequence belongs to the aconitase/IPM isomerase family. LeuC type 1 subfamily. Heterodimer of LeuC and LeuD. Requires [4Fe-4S] cluster as cofactor.

The catalysed reaction is (2R,3S)-3-isopropylmalate = (2S)-2-isopropylmalate. It participates in amino-acid biosynthesis; L-leucine biosynthesis; L-leucine from 3-methyl-2-oxobutanoate: step 2/4. In terms of biological role, catalyzes the isomerization between 2-isopropylmalate and 3-isopropylmalate, via the formation of 2-isopropylmaleate. This Saccharopolyspora erythraea (strain ATCC 11635 / DSM 40517 / JCM 4748 / NBRC 13426 / NCIMB 8594 / NRRL 2338) protein is 3-isopropylmalate dehydratase large subunit.